Here is a 416-residue protein sequence, read N- to C-terminus: D-amino acid dehydrogenase 2 (416 aa).

5-19 serves as a coordination point for FAD; it reads VCIIGAGVVGLATAY.

The protein belongs to the DadA oxidoreductase family. Requires FAD as cofactor.

It catalyses the reaction a D-alpha-amino acid + A + H2O = a 2-oxocarboxylate + AH2 + NH4(+). Oxidative deamination of D-amino acids. The sequence is that of D-amino acid dehydrogenase 2 (dadA2) from Pseudomonas aeruginosa (strain ATCC 15692 / DSM 22644 / CIP 104116 / JCM 14847 / LMG 12228 / 1C / PRS 101 / PAO1).